Reading from the N-terminus, the 451-residue chain is UPF0210 protein Asuc_1169 (451 aa).

Belongs to the UPF0210 family. As to quaternary structure, homodimer.

The chain is UPF0210 protein Asuc_1169 from Actinobacillus succinogenes (strain ATCC 55618 / DSM 22257 / CCUG 43843 / 130Z).